Reading from the N-terminus, the 85-residue chain is Large ribosomal subunit protein bL27 (85 aa).

The interval 1 to 23 is disordered; that stretch reads MAHKKAGGSTRNGRDSESKRLGV.

The protein belongs to the bacterial ribosomal protein bL27 family.

This chain is Large ribosomal subunit protein bL27, found in Thioalkalivibrio sulfidiphilus (strain HL-EbGR7).